A 417-amino-acid polypeptide reads, in one-letter code: MLEQMGIAAKQASYKLAQLSSREKNRVLEKIADELEAQSESILNANAQDVADARANGLSEAMLDRLALTPARLKDIADDVRQVCNLADPVGQVIDGGVLDSGLRLERRRVPLGVIGVIYEARPNVTVDVASLCLKTGNAVILRGGKETCRTNAATVAVIQDALKSCGLPAGAVQAIDNPDRALVSEMLRMDKYIDMLIPRGGAGLHKLCREQSTIPVITGGIGVCHIYVDESAEIAEALKVIVNAKTQRPSTCNTVETLLVNKNIADSFLPALSKQMAESGVTLHADAAALAQLQAGPAKVVAVKAEEYDDEFLSLDLNVKIVSDLDDAIAHIREHGTQHSDAILTRDMRNAQRFVNEVDSSAVYVNASTRFTDGGQFGLGAEVAVSTQKLHARGPMGLEALTTYKWIGIGDYTIRA.

This sequence belongs to the gamma-glutamyl phosphate reductase family.

It is found in the cytoplasm. The catalysed reaction is L-glutamate 5-semialdehyde + phosphate + NADP(+) = L-glutamyl 5-phosphate + NADPH + H(+). It functions in the pathway amino-acid biosynthesis; L-proline biosynthesis; L-glutamate 5-semialdehyde from L-glutamate: step 2/2. Its function is as follows. Catalyzes the NADPH-dependent reduction of L-glutamate 5-phosphate into L-glutamate 5-semialdehyde and phosphate. The product spontaneously undergoes cyclization to form 1-pyrroline-5-carboxylate. The chain is Gamma-glutamyl phosphate reductase from Escherichia coli O81 (strain ED1a).